We begin with the raw amino-acid sequence, 938 residues long: AP-2 complex subunit alpha-2 (938 aa).

A 1,2-diacyl-sn-glycero-3-phospho-(1D-myo-inositol-3,4,5-trisphosphate) is bound by residues 11–12 (RG), Lys-43, Tyr-53, and 57–61 (KYVCK). The tract at residues 616–677 (LKKKKGPSTV…APPVPAGPPP (62 aa)) is disordered. The span at 645 to 668 (PALASTSAVSTPSPSADLLGLGAA) shows a compositional bias: low complexity.

This sequence belongs to the adaptor complexes large subunit family. As to quaternary structure, adaptor protein complex 2 (AP-2) is a heterotetramer composed of two large adaptins (alpha-type subunit AP2A1 or AP2A2 and beta-type subunit AP2B1), a medium adaptin (mu-type subunit AP2M1) and a small adaptin (sigma-type subunit AP2S1). Binds clathrin. Binds EPN1, EPS15, AMPH, SNAP91 and BIN1. Interacts with HIP1. Interacts with DGKD. Interacts with DENND1A, DENND1B and DENND1C. Interacts with FCHO1. Interacts with ATAT1; this interaction is required for efficient alpha-tubulin acetylation by ATAT1. Interacts with KIAA1107. Together with AP2B1 and AP2M1, it interacts with ADAM10; this interaction facilitates ADAM10 endocytosis from the plasma membrane during long-term potentiation in hippocampal neurons. Interacts with CLN3 (via dileucine motif). Interacts with ABCB11; this interaction regulates cell membrane expression of ABCB11 through its internalization in a clathrin-dependent manner and its subsequent degradation. Interacts with DNAJC6.

It localises to the cell membrane. It is found in the membrane. Its subcellular location is the coated pit. Its function is as follows. Component of the adaptor protein complex 2 (AP-2). Adaptor protein complexes function in protein transport via transport vesicles in different membrane traffic pathways. Adaptor protein complexes are vesicle coat components and appear to be involved in cargo selection and vesicle formation. AP-2 is involved in clathrin-dependent endocytosis in which cargo proteins are incorporated into vesicles surrounded by clathrin (clathrin-coated vesicles, CCVs) which are destined for fusion with the early endosome. The clathrin lattice serves as a mechanical scaffold but is itself unable to bind directly to membrane components. Clathrin-associated adaptor protein (AP) complexes which can bind directly to both the clathrin lattice and to the lipid and protein components of membranes are considered to be the major clathrin adaptors contributing the CCV formation. AP-2 also serves as a cargo receptor to selectively sort the membrane proteins involved in receptor-mediated endocytosis. AP-2 seems to play a role in the recycling of synaptic vesicle membranes from the presynaptic surface. AP-2 recognizes Y-X-X-[FILMV] (Y-X-X-Phi) and [ED]-X-X-X-L-[LI] endocytosis signal motifs within the cytosolic tails of transmembrane cargo molecules. AP-2 may also play a role in maintaining normal post-endocytic trafficking through the ARF6-regulated, non-clathrin pathway. During long-term potentiation in hippocampal neurons, AP-2 is responsible for the endocytosis of ADAM10. The AP-2 alpha subunit binds polyphosphoinositide-containing lipids, positioning AP-2 on the membrane. The AP-2 alpha subunit acts via its C-terminal appendage domain as a scaffolding platform for endocytic accessory proteins. The AP-2 alpha and AP-2 sigma subunits are thought to contribute to the recognition of the [ED]-X-X-X-L-[LI] motif. In Bos taurus (Bovine), this protein is AP-2 complex subunit alpha-2.